Consider the following 348-residue polypeptide: Dihydroorotase (348 aa).

Residues H17 and H19 each coordinate Zn(2+). Substrate is bound by residues 19 to 21 (HLR) and N45. Residues K103, H140, and H178 each coordinate Zn(2+). K103 is modified (N6-carboxylysine). H140 serves as a coordination point for substrate. L223 lines the substrate pocket. Position 251 (D251) interacts with Zn(2+). D251 is an active-site residue. 2 residues coordinate substrate: H255 and A267.

Belongs to the metallo-dependent hydrolases superfamily. DHOase family. Class II DHOase subfamily. As to quaternary structure, homodimer. Zn(2+) is required as a cofactor.

It carries out the reaction (S)-dihydroorotate + H2O = N-carbamoyl-L-aspartate + H(+). The protein operates within pyrimidine metabolism; UMP biosynthesis via de novo pathway; (S)-dihydroorotate from bicarbonate: step 3/3. Catalyzes the reversible cyclization of carbamoyl aspartate to dihydroorotate. The chain is Dihydroorotase from Salmonella typhimurium (strain LT2 / SGSC1412 / ATCC 700720).